We begin with the raw amino-acid sequence, 237 residues long: Class B acid phosphatase (237 aa).

A signal peptide spans 1–23; that stretch reads MKKITLALSAVCLLFTLNHSANA. The active-site Nucleophile is aspartate 69. Mg(2+) is bound by residues aspartate 69 and aspartate 71. Aspartate 71 serves as the catalytic Proton donor. Substrate contacts are provided by residues 137-138 and lysine 177; that span reads TG. Aspartate 192 lines the Mg(2+) pocket.

It belongs to the class B bacterial acid phosphatase family. In terms of assembly, homotetramer. The cofactor is Mg(2+).

The protein resides in the periplasm. The enzyme catalyses a phosphate monoester + H2O = an alcohol + phosphate. In terms of biological role, dephosphorylates several organic phosphate monoesters including monophosphate nucleotides (NMPs), coenzyme A (CoA), nicotinamide adenine dinucleotide phosphate (NADP), flavin mononucleotide (FMN) and phosphorylated 5-6 carbon sugars in vitro. Also has a phosphotransferase activity catalyzing the transfer of low-energy phosphate groups from organic phosphate monoesters to free hydroxyl groups of various organic compounds. This Salmonella typhi protein is Class B acid phosphatase (aphA).